A 65-amino-acid chain; its full sequence is Large ribosomal subunit protein bL33m (65 aa).

It belongs to the bacterial ribosomal protein bL33 family. As to quaternary structure, component of the mitochondrial ribosome large subunit (39S) which comprises a 16S rRNA and about 50 distinct proteins.

It is found in the mitochondrion. The polypeptide is Large ribosomal subunit protein bL33m (mRpL33) (Anopheles gambiae (African malaria mosquito)).